The following is a 90-amino-acid chain: Large ribosomal subunit protein bL27 (90 aa).

Residues 1–21 (MASKKAGGSTRNGRDSEAKRL) form a disordered region.

It belongs to the bacterial ribosomal protein bL27 family.

This is Large ribosomal subunit protein bL27 from Neisseria meningitidis serogroup C (strain 053442).